A 204-amino-acid chain; its full sequence is N-(5'-phosphoribosyl)anthranilate isomerase (204 aa).

The protein belongs to the TrpF family.

It catalyses the reaction N-(5-phospho-beta-D-ribosyl)anthranilate = 1-(2-carboxyphenylamino)-1-deoxy-D-ribulose 5-phosphate. The protein operates within amino-acid biosynthesis; L-tryptophan biosynthesis; L-tryptophan from chorismate: step 3/5. The chain is N-(5'-phosphoribosyl)anthranilate isomerase from Bacillus cereus (strain G9842).